Reading from the N-terminus, the 189-residue chain is Elongation factor P (189 aa).

It belongs to the elongation factor P family.

The protein resides in the cytoplasm. It functions in the pathway protein biosynthesis; polypeptide chain elongation. Involved in peptide bond synthesis. Stimulates efficient translation and peptide-bond synthesis on native or reconstituted 70S ribosomes in vitro. Probably functions indirectly by altering the affinity of the ribosome for aminoacyl-tRNA, thus increasing their reactivity as acceptors for peptidyl transferase. The sequence is that of Elongation factor P from Rhizobium etli (strain ATCC 51251 / DSM 11541 / JCM 21823 / NBRC 15573 / CFN 42).